Here is a 394-residue protein sequence, read N- to C-terminus: Probable 6-phosphogluconolactonase ARB_02015 (394 aa).

An N-terminal signal peptide occupies residues 1-21 (MKTVPFLSLLQAGILTSGIVA). An N-linked (GlcNAc...) asparagine glycan is attached at Asn51.

The protein belongs to the cycloisomerase 2 family.

Its subcellular location is the secreted. It carries out the reaction 6-phospho-D-glucono-1,5-lactone + H2O = 6-phospho-D-gluconate + H(+). It functions in the pathway carbohydrate degradation; pentose phosphate pathway; D-ribulose 5-phosphate from D-glucose 6-phosphate (oxidative stage): step 2/3. Its function is as follows. Catalyzes the hydrolysis of 6-phosphogluconolactone to 6-phosphogluconate. This chain is Probable 6-phosphogluconolactonase ARB_02015, found in Arthroderma benhamiae (strain ATCC MYA-4681 / CBS 112371) (Trichophyton mentagrophytes).